Reading from the N-terminus, the 98-residue chain is NADH-ubiquinone oxidoreductase chain 4L (98 aa).

3 consecutive transmembrane segments (helical) span residues 1 to 21 (MSLV…GLLM), 29 to 49 (ALLC…LTIL), and 61 to 81 (IILL…LVMI).

Belongs to the complex I subunit 4L family. As to quaternary structure, core subunit of respiratory chain NADH dehydrogenase (Complex I) which is composed of 45 different subunits.

It is found in the mitochondrion inner membrane. The enzyme catalyses a ubiquinone + NADH + 5 H(+)(in) = a ubiquinol + NAD(+) + 4 H(+)(out). Its function is as follows. Core subunit of the mitochondrial membrane respiratory chain NADH dehydrogenase (Complex I) which catalyzes electron transfer from NADH through the respiratory chain, using ubiquinone as an electron acceptor. Part of the enzyme membrane arm which is embedded in the lipid bilayer and involved in proton translocation. This is NADH-ubiquinone oxidoreductase chain 4L (MT-ND4L) from Delphinapterus leucas (Beluga whale).